Here is a 556-residue protein sequence, read N- to C-terminus: Arginine--tRNA ligase 1 (556 aa).

A 'HIGH' region motif is present at residues 132–142; sequence ANPTGNLHLGH.

It belongs to the class-I aminoacyl-tRNA synthetase family. Monomer.

It localises to the cytoplasm. It catalyses the reaction tRNA(Arg) + L-arginine + ATP = L-arginyl-tRNA(Arg) + AMP + diphosphate. The polypeptide is Arginine--tRNA ligase 1 (argS1) (Halalkalibacterium halodurans (strain ATCC BAA-125 / DSM 18197 / FERM 7344 / JCM 9153 / C-125) (Bacillus halodurans)).